A 530-amino-acid chain; its full sequence is TNF receptor-associated factor 6 (530 aa).

The segment at 1 to 362 (MSLLNCENSC…EAQQCNGIYI (362 aa)) is interaction with TAX1BP1. The segment at 70-109 (CPICLMALREAVQTPCGHRFCKACITKSIRDAGHKCPVDN) adopts an RING-type; degenerate zinc-finger fold. Lys124 is covalently cross-linked (Glycyl lysine isopeptide (Lys-Gly) (interchain with G-Cter in SUMO); alternate). Lys124 participates in a covalent cross-link: Glycyl lysine isopeptide (Lys-Gly) (interchain with G-Cter in ubiquitin); alternate. Lys142 participates in a covalent cross-link: Glycyl lysine isopeptide (Lys-Gly) (interchain with G-Cter in SUMO). 2 TRAF-type zinc fingers span residues 150-202 (DHQV…EEKE) and 203-259 (IHDQ…NHLA). A coiled-coil region spans residues 302–356 (NYEETVKQLEGRLVRQDHQIRELTAKMETQSMHVSELKRTIRSLEDKVAEMEAQQ). Lys327 participates in a covalent cross-link: Glycyl lysine isopeptide (Lys-Gly) (interchain with G-Cter in ubiquitin). An MATH domain is found at 358-507 (NGIYIWKIGN…DDTLLVRCEV (150 aa)). Residues 363–530 (WKIGNFGMHL…FQPRSTDAGV (168 aa)) are interaction with TANK. A Glycyl lysine isopeptide (Lys-Gly) (interchain with G-Cter in SUMO) cross-link involves residue Lys461.

It belongs to the TNF receptor-associated factor family. A subfamily. As to quaternary structure, homotrimer. Homooligomer. N-terminal region is dimeric while C-terminal region is trimeric; maybe providing a mode of oligomerization. Upon IL1B treatment, forms a complex with PELI1, IRAK1, IRAK4 and MYD88; this complex recruits MAP3K7/TAK1, TAB1 and TAB2 to mediate NF-kappa-B activation. Direct binding of SMAD6 to PELI1 prevents the complex formation and hence negatively regulates IL1R-TLR signaling and eventually NF-kappa-B-mediated gene expression. Binds to TNFRSF5/CD40 and TNFRSF11A/RANK. Associates with NGFR, TNFRSF17, IRAK2, IRAK3, RIPK2, MAP3K1, MAP3K5, MAP3K14, CSK, TRAF, TRAF-interacting protein TRIP and TNF receptor associated protein TDP2. Interacts with IL17R. Interacts with SQSTM1 bridging NTRK1 and NGFR. Forms a ternary complex with SQSTM1 and PRKCZ. Interacts with PELI2 and PELI3. Binds UBE2V1. Interacts with TAX1BP1; this interaction mediates deubiquitination of TRAF6 and inhibition of NF-kappa-B activation. Interacts with ZNF675. Interacts with ARRB1 and ARRB2. Interacts with MAP3K7 and TAB1/MAP3K7IP1; during IL-1 signaling. Interacts with UBE2N. Interacts with TGFBR1, HDAC1 and RANGAP1. Interacts with AKT1, AKT2 and AKT3. Interacts (via TRAF domains) with NUMBL (via C-terminal). Interacts with RBCK1. Interacts with LIMD1 (via LIM domains). Interacts with RSAD2/viperin. Interacts (via C-terminus) with EIF2AK2/PKR (via the kinase catalytic domain). Interacts with ZFAND5. Interacts with IL1RL1. Interacts with TRAFD1. Interacts with AJUBA. Interacts with MAVS/IPS1. Interacts (via TRAF domains) with DYNC2I2 (via WD domains). Interacts with IFIT3 (via N-terminus). Interacts with TICAM2. Interacts with CARD14. Interacts with CD40 and MAP3K8; the interaction is required for ERK activation. Interacts with TICAM1 and this interaction is enhanced in the presence of WDFY1. Interacts with TANK; this interaction increases in response to DNA damage. Interacts with USP10; this interaction increases in response to DNA damage. Interacts with ZC3H12A; this interaction increases in response to DNA damage and is stimulated by TANK. Interacts with WDFY3. Interacts with TRIM13. Interacts with GPS2. Interacts (via C-terminus) with SASH1. Interacts with LRRC19. Interacts with IL17RA and TRAF3IP2. Interacts with TOMM70. Interacts with AMBRA1; interaction is required to mediate 'Lys-63'-linked ubiquitination of ULK1. Interacts with CRBN; this interaction inhibits TLR4-mediated signaling by preventing TRAF6-mediated ubiquitination of ECSIT. In terms of processing, sumoylated on Lys-124, Lys-142 and Lys-461 with SUMO1. Polyubiquitinated on Lys-124 by TRAF3IP2; after cell stimulation with IL17A. Polyubiquitinated; after cell stimulation with IL1B or TGFB. This ligand-induced cell stimulation leads to dimerization/oligomerization of TRAF6 molecules, followed by auto-ubiquitination which involves UBE2N and UBE2V1 and leads to TRAF6 activation. This 'Lys-63' site-specific poly-ubiquitination appears to be associated with the activation of signaling molecules. Endogenous autoubiquitination occurs only for the cytoplasmic form. Deubiquitinated by USP10 in a TANK-dependent manner, leading to the negative regulation of NF-kappa-B signaling upon DNA damage. LRRC19 induces 'Lys-63' ubiquitination. Ubiquitinated at Lys-327 by the SCF(FBXL2) complex, leading to its degradation by the proteasome.

The protein resides in the cytoplasm. Its subcellular location is the cell cortex. The protein localises to the nucleus. It localises to the lipid droplet. The enzyme catalyses S-ubiquitinyl-[E2 ubiquitin-conjugating enzyme]-L-cysteine + [acceptor protein]-L-lysine = [E2 ubiquitin-conjugating enzyme]-L-cysteine + N(6)-ubiquitinyl-[acceptor protein]-L-lysine.. Its pathway is protein modification; protein ubiquitination. In terms of biological role, E3 ubiquitin ligase that, together with UBE2N and UBE2V1, mediates the synthesis of 'Lys-63'-linked-polyubiquitin chains conjugated to proteins, such as ECSIT, IKBKG, IRAK1, AKT1 and AKT2. Also mediates ubiquitination of free/unanchored polyubiquitin chain that leads to MAP3K7 activation. Leads to the activation of NF-kappa-B and JUN. Seems to also play a role in dendritic cells (DCs) maturation and/or activation. Represses c-Myb-mediated transactivation, in B-lymphocytes. Adapter protein that seems to play a role in signal transduction initiated via TNF receptor, IL-1 receptor and IL-17 receptor. Regulates osteoclast differentiation by mediating the activation of adapter protein complex 1 (AP-1) and NF-kappa-B, in response to RANK-L stimulation. Together with MAP3K8, mediates CD40 signals that activate ERK in B-cells and macrophages, and thus may play a role in the regulation of immunoglobulin production. Acts as a regulator of the JNK and NF-kappa-B signaling pathways by initiating assembly of heterotypic 'Lys-63'-/'Lys-48'-linked branched ubiquitin chains that are then recognized by TAB2: TRAF6 catalyzes initial 'Lys-63'-linked-polyubiquitin chains that are then branched via 'Lys-48'-linked polyubiquitin by HUWE1. 'Lys-63'-/'Lys-48'-linked branched ubiquitin chains protect 'Lys-63'-linkages from CYLD deubiquitination. Also participates in the TCR signaling by ubiquitinating LAT. The protein is TNF receptor-associated factor 6 (Traf6) of Rattus norvegicus (Rat).